The following is a 190-amino-acid chain: Peptidyl-tRNA hydrolase (190 aa).

Tyr14 contacts tRNA. The Proton acceptor role is filled by His19. Positions 64, 66, and 112 each coordinate tRNA.

This sequence belongs to the PTH family. Monomer.

The protein resides in the cytoplasm. It carries out the reaction an N-acyl-L-alpha-aminoacyl-tRNA + H2O = an N-acyl-L-amino acid + a tRNA + H(+). Its function is as follows. Hydrolyzes ribosome-free peptidyl-tRNAs (with 1 or more amino acids incorporated), which drop off the ribosome during protein synthesis, or as a result of ribosome stalling. In terms of biological role, catalyzes the release of premature peptidyl moieties from peptidyl-tRNA molecules trapped in stalled 50S ribosomal subunits, and thus maintains levels of free tRNAs and 50S ribosomes. This is Peptidyl-tRNA hydrolase from Chlorobium chlorochromatii (strain CaD3).